Here is a 484-residue protein sequence, read N- to C-terminus: MSMSSSNITSGFIDIATFDEIEKYMYGGPTATAYFVREIRKSTWFTQVPVPLSRNTGNAAFGQEWSVSISRAGDYLLQTWLRVNIPQVTLNPLLAATFSLRWTRNLMHNLIREATITFNDLVAARFDNYHLDFWSAFTVPASKRTGYDNMIGNVSSLINPVAPGGNLGSTGGTNLNLPLPFFFSRDTGVALPTAALPYNEMQINFNFRDWTELLVLQNSALVAPASPYVPIVVPTHLTVAPVLGPVQVWANYAIVSNEERRRMGCAIRDILIEQVQTAPRQNYTPLTNASPTFDIRFSHAIKALFFSVRNKTSASEWSNYATSSPVVTGATVNFEPTGSFDPIANTTLIYENTNRLGAMGSDYFSLINPFYHAPTIPSFIGYHLYSYSLHFYDLDPMGSTNYGKLTNVSVVPQASPAAVNAASGAGGFPGSDYPQSYEFVIVAVNNNIVRISGGETPQNYLSGSFVTLLNRRKWSREGPMIMVQ.

Belongs to the NCLDV major capsid protein family. As to quaternary structure, homotrimer.

The protein localises to the virion. Functionally, major capsid protein that self assembles to form an icosahedral capsid. Represents around 50% of the total virion protein mass. The sequence is that of Major capsid protein (MCP) from Wiseana iridescent virus (WIV).